The sequence spans 320 residues: MKKPNGTNGASSSLEPPPSTFQPLCHPLVEEVSKEVDGYFLQHWNFPNEKARKKFVAAGFSRVTCLYFPKALDDRIHFACRLLTVLFLIDDLLEYMSFEEGSAYNEKLIPISRGDVLPDRSIPVEYIIYDLWESMRAHDREMADEILEPVFLFMRAQTDRTRARPMGLGGYLEYRERDVGKELLAALMRFSMGLKLSPSELQRVREIDANCSKHLSVVNDIYSYEKELYTSKTAHSEGGILCTSVQILAQEADVTAEAAKRVLFVMCREWELRHQLLVARLSAEGLETPGLAAYVEGLEYQMSGNELWSQTTLRYSVVVD.

A compositionally biased stretch (polar residues) spans 1–14; the sequence is MKKPNGTNGASSSL. Residues 1-20 are disordered; that stretch reads MKKPNGTNGASSSLEPPPST. Asp90, Asn219, Ser223, and Glu227 together coordinate Mg(2+). The (2E,6E)-farnesyl diphosphate site is built by Arg314 and Tyr315.

It belongs to the terpene synthase family. In terms of assembly, homodimer. Mg(2+) serves as cofactor.

It catalyses the reaction (2E,6E)-farnesyl diphosphate = (+)-aristolochene + diphosphate. It functions in the pathway sesquiterpene biosynthesis; aristolochene biosynthesis; aristolochene from farnesyl diphosphate: step 1/1. In terms of biological role, catalyzes the cyclization of trans,trans-farnesyl diphosphate (FPP) to the bicyclic sesquiterpene aristolochene. Produces germacrene A as an enzyme-bound intermediate that is not released by the enzyme, but is further cyclized to produce aristolochene. Aristolochene is the likely parent compound for a number of sesquiterpenoid toxins produced by filamentous fungi. The polypeptide is Aristolochene synthase (Ari1) (Aspergillus terreus).